We begin with the raw amino-acid sequence, 100 residues long: NADH-quinone oxidoreductase subunit K (100 aa).

Helical transmembrane passes span M1–G21, I28–A48, and F64–F84.

Belongs to the complex I subunit 4L family. In terms of assembly, NDH-1 is composed of 14 different subunits. Subunits NuoA, H, J, K, L, M, N constitute the membrane sector of the complex.

It localises to the cell inner membrane. The enzyme catalyses a quinone + NADH + 5 H(+)(in) = a quinol + NAD(+) + 4 H(+)(out). NDH-1 shuttles electrons from NADH, via FMN and iron-sulfur (Fe-S) centers, to quinones in the respiratory chain. The immediate electron acceptor for the enzyme in this species is believed to be ubiquinone. Couples the redox reaction to proton translocation (for every two electrons transferred, four hydrogen ions are translocated across the cytoplasmic membrane), and thus conserves the redox energy in a proton gradient. The protein is NADH-quinone oxidoreductase subunit K of Helicobacter pylori (strain Shi470).